We begin with the raw amino-acid sequence, 165 residues long: Polcalcin Jun o 2 (165 aa).

EF-hand domains follow at residues 22-57 (QSVHELEEVFKKFDANGDGKISGSELADILRSLGSD), 58-86 (VGEAEVKAMMEEADADGDGYVSLQEFVDL), 91-126 (ASVKDLKNAFKVFDRDCNGSISAAELCHTLESVGEP), and 127-162 (CTIEESKNIIHNVDKNGDGLISVEEFQTMMTSEMTD). Ca(2+) is bound by residues Asp-35, Asn-37, Asp-39, Lys-41, Glu-46, Asp-71, Asp-73, Asp-75, Tyr-77, Glu-82, Asp-104, Asp-106, Asn-108, Ser-110, Glu-115, Asp-140, Asn-142, Asp-144, and Glu-151.

This is Polcalcin Jun o 2 from Juniperus oxycedrus (Prickly juniper).